Reading from the N-terminus, the 202-residue chain is Nucleoside triphosphate pyrophosphatase (202 aa).

Residue Asp-79 is the Proton acceptor of the active site.

This sequence belongs to the Maf family. A divalent metal cation serves as cofactor.

The protein localises to the cytoplasm. It carries out the reaction a ribonucleoside 5'-triphosphate + H2O = a ribonucleoside 5'-phosphate + diphosphate + H(+). It catalyses the reaction a 2'-deoxyribonucleoside 5'-triphosphate + H2O = a 2'-deoxyribonucleoside 5'-phosphate + diphosphate + H(+). Its function is as follows. Nucleoside triphosphate pyrophosphatase. May have a dual role in cell division arrest and in preventing the incorporation of modified nucleotides into cellular nucleic acids. The protein is Nucleoside triphosphate pyrophosphatase of Rhodopseudomonas palustris (strain ATCC BAA-98 / CGA009).